We begin with the raw amino-acid sequence, 227 residues long: Ribonuclease 3 (227 aa).

Residues 6-128 (ASDYQQRIGY…VIAAIYLDAD (123 aa)) form the RNase III domain. Glu41 lines the Mg(2+) pocket. Residue Asp45 is part of the active site. Mg(2+)-binding residues include Asp114 and Glu117. Residue Glu117 is part of the active site. Residues 155–225 (DPKTRLQEWL…ASHAINQLDS (71 aa)) enclose the DRBM domain. The span at 203–212 (GEGSSRRLAE) shows a compositional bias: basic and acidic residues. A disordered region spans residues 203-227 (GEGSSRRLAEQDAASHAINQLDSNK).

The protein belongs to the ribonuclease III family. As to quaternary structure, homodimer. It depends on Mg(2+) as a cofactor.

The protein localises to the cytoplasm. The enzyme catalyses Endonucleolytic cleavage to 5'-phosphomonoester.. Its function is as follows. Digests double-stranded RNA. Involved in the processing of primary rRNA transcript to yield the immediate precursors to the large and small rRNAs (23S and 16S). Processes some mRNAs, and tRNAs when they are encoded in the rRNA operon. Processes pre-crRNA and tracrRNA of type II CRISPR loci if present in the organism. The protein is Ribonuclease 3 of Xylella fastidiosa (strain M12).